A 1017-amino-acid polypeptide reads, in one-letter code: Protein HIR2 (1017 aa).

WD repeat units follow at residues 10–49 (YHNG…ELSK), 74–117 (CHKS…QLFP), 124–163 (SEVN…FQEL), 167–208 (CHEK…DDTS), 228–271 (PLNV…TNIE), 275–326 (GHDF…PITV), and 330–371 (AVQG…YTFS). The interval 417–561 (ISTTTSSSNT…APSDLPRSNS (145 aa)) is disordered. Over residues 473–483 (LDDDIDGDGDD) the composition is skewed to acidic residues. Composition is skewed to polar residues over residues 518–535 (SDST…VTTK) and 545–561 (LISS…RSNS).

The protein belongs to the WD repeat HIR1 family.

It is found in the nucleus. Functionally, required for replication-independent chromatin assembly and for the periodic repression of histone gene transcription during the cell cycle. This Candida albicans (strain SC5314 / ATCC MYA-2876) (Yeast) protein is Protein HIR2 (HIR2).